Consider the following 626-residue polypeptide: Glycosyltransferase 25 family member (626 aa).

The first 21 residues, 1 to 21 (MLKKQVFYGILLICAFVCIYG), serve as a signal peptide directing secretion. N-linked (GlcNAc...) asparagine glycans are attached at residues Asn-113, Asn-234, Asn-272, and Asn-533. The short motif at 623 to 626 (HQEL) is the Prevents secretion from ER element.

The protein belongs to the glycosyltransferase 25 family.

Its subcellular location is the endoplasmic reticulum lumen. This is Glycosyltransferase 25 family member from Drosophila pseudoobscura pseudoobscura (Fruit fly).